The primary structure comprises 91 residues: Acylphosphatase (91 aa).

One can recognise an Acylphosphatase-like domain in the interval 3–89 (AKHLILSGRV…PAEPGFVKRA (87 aa)). Active-site residues include Arg18 and Asn36.

The protein belongs to the acylphosphatase family.

The catalysed reaction is an acyl phosphate + H2O = a carboxylate + phosphate + H(+). The polypeptide is Acylphosphatase (acyP) (Acidiphilium cryptum (strain JF-5)).